Here is a 129-residue protein sequence, read N- to C-terminus: Large ribosomal subunit protein bL17 (129 aa).

It belongs to the bacterial ribosomal protein bL17 family. As to quaternary structure, part of the 50S ribosomal subunit. Contacts protein L32.

This Actinobacillus succinogenes (strain ATCC 55618 / DSM 22257 / CCUG 43843 / 130Z) protein is Large ribosomal subunit protein bL17.